A 477-amino-acid chain; its full sequence is Succinate-semialdehyde dehydrogenase [NADP(+)] (477 aa).

NADP(+) is bound by residues 142–143, 166–169, and 218–219; these read WN, KHSE, and GS. The active-site Proton acceptor is the E240. L241 is a binding site for NADP(+). C274 serves as the catalytic Nucleophile. E371 is a binding site for NADP(+).

Belongs to the aldehyde dehydrogenase family.

The catalysed reaction is succinate semialdehyde + NADP(+) + H2O = succinate + NADPH + 2 H(+). The protein operates within amino-acid degradation; 4-aminobutanoate degradation. In terms of biological role, catalyzes the NADP(+) dependent oxidation of succinate semialdehyde to succinate. The protein is Succinate-semialdehyde dehydrogenase [NADP(+)] (ssdA) of Deinococcus radiodurans (strain ATCC 13939 / DSM 20539 / JCM 16871 / CCUG 27074 / LMG 4051 / NBRC 15346 / NCIMB 9279 / VKM B-1422 / R1).